The following is a 312-amino-acid chain: Ribonuclease Z (312 aa).

Residues histidine 62, histidine 64, aspartate 66, histidine 67, histidine 144, aspartate 215, and histidine 273 each contribute to the Zn(2+) site. Residue aspartate 66 is the Proton acceptor of the active site.

This sequence belongs to the RNase Z family. In terms of assembly, homodimer. Zn(2+) serves as cofactor.

It carries out the reaction Endonucleolytic cleavage of RNA, removing extra 3' nucleotides from tRNA precursor, generating 3' termini of tRNAs. A 3'-hydroxy group is left at the tRNA terminus and a 5'-phosphoryl group is left at the trailer molecule.. Zinc phosphodiesterase, which displays some tRNA 3'-processing endonuclease activity. Probably involved in tRNA maturation, by removing a 3'-trailer from precursor tRNA. The protein is Ribonuclease Z of Prochlorococcus marinus (strain MIT 9515).